Reading from the N-terminus, the 507-residue chain is ATP synthase subunit alpha (507 aa).

Residue 168–175 (GDRQTGKT) participates in ATP binding.

Belongs to the ATPase alpha/beta chains family. As to quaternary structure, F-type ATPases have 2 components, CF(1) - the catalytic core - and CF(0) - the membrane proton channel. CF(1) has five subunits: alpha(3), beta(3), gamma(1), delta(1), epsilon(1). CF(0) has three main subunits: a(1), b(2) and c(9-12). The alpha and beta chains form an alternating ring which encloses part of the gamma chain. CF(1) is attached to CF(0) by a central stalk formed by the gamma and epsilon chains, while a peripheral stalk is formed by the delta and b chains.

It is found in the cell membrane. The catalysed reaction is ATP + H2O + 4 H(+)(in) = ADP + phosphate + 5 H(+)(out). Functionally, produces ATP from ADP in the presence of a proton gradient across the membrane. The alpha chain is a regulatory subunit. The polypeptide is ATP synthase subunit alpha (Mesomycoplasma hyopneumoniae (strain 7448) (Mycoplasma hyopneumoniae)).